We begin with the raw amino-acid sequence, 217 residues long: C-type lectin domain family 2 member I (217 aa).

Residues 1–53 (MPDCLETGEKLFVHNMNAQCVQKPEEGNGPLGTGGKIVQGKCFRIISTVSPVK) lie on the Cytoplasmic side of the membrane. Residues 54 to 74 (LYCCYGVIMVLTVAVIALSVA) traverse the membrane as a helical; Signal-anchor for type II membrane protein segment. At 75 to 217 (LSTKKTEQII…YNLHCQTPPV (143 aa)) the chain is on the extracellular side. Cysteines 92 and 103 form a disulfide. One can recognise a C-type lectin domain in the interval 99–203 (VGNKCFYFSG…SYINRMWICS (105 aa)). Residue Asn-112 is glycosylated (N-linked (GlcNAc...) asparagine). Cys-120 and Cys-202 are oxidised to a cystine.

As to expression, detected in osteoblasts, growth plate chondrocytes and skeletal muscle overlying the bone (at protein level). Detected in spleen, B-cells, dendritic cells, thymus, and in IL2-activated natural killer cells.

The protein localises to the cell membrane. Its function is as follows. Inhibits osteoclast formation. Receptor for KLRB1F. Enhances T-cell activation. Plays a role in splenocyte activation, T-cell responses and IL-2 production. In Mus musculus (Mouse), this protein is C-type lectin domain family 2 member I (Clec2i).